Reading from the N-terminus, the 296-residue chain is Ribonuclease MRP protein subunit POP4 (296 aa).

Disordered stretches follow at residues 29-74 (LLQQ…VDPK) and 148-173 (SASG…KRLK). Residues 36–56 (KNEKDKKGTSDVDVSMKESHQ) show a composition bias toward basic and acidic residues. Over residues 57-66 (ADSLPTPSKT) the composition is skewed to polar residues. Positions 160 to 167 (SKRSKSRM) match the Nuclear localization signal motif. Residues 163–173 (SKSRMSMKRLK) show a composition bias toward basic residues.

Belongs to the eukaryotic/archaeal RNase P protein component 1 family. In terms of assembly, component of nuclear RNase MRP complexes. Several subunits of RNase P are also part of the RNase MRP complex. RNase MRP consists of a catalytic RNA moiety and several protein subunits.

It localises to the nucleus. Functionally, component of the MRP ribonuclease complex, which cleaves pre-rRNA sequences. Required for rRNA maturation, including 5.8S rRNA processing. Seems not involved in tRNA maturation. The protein is Ribonuclease MRP protein subunit POP4 of Arabidopsis thaliana (Mouse-ear cress).